Reading from the N-terminus, the 587-residue chain is Trihelix transcription factor GTL1 (587 aa).

2 stretches are compositionally biased toward gly residues: residues 1 to 10 (MEQGGGGGGN) and 41 to 54 (GGLG…GGGS). The disordered stretch occupies residues 1–63 (MEQGGGGGGN…SASSSSGNRW (63 aa)). In terms of domain architecture, Myb-like 1 spans 55-119 (ASSSSGNRWP…KCKEKFENVQ (65 aa)). Positions 96–103 (SRKLLELG) match the Nuclear localization signal 1 motif. Residues 173-194 (SSSPFPVFSQPQPQTQTQPPQT) are compositionally biased toward low complexity. A disordered region spans residues 173 to 264 (SSSPFPVFSQ…RKRGNRGGGG (92 aa)). The span at 201–210 (PTPPPLPLPS) shows a compositional bias: pro residues. Residues 221 to 232 (SSHSSSTASGMG) are compositionally biased toward low complexity. Over residues 233–242 (SDDDDDDMDV) the composition is skewed to acidic residues. Positions 285–328 (QRSFLEALEKREQERLDREEAWKRQEMARLAREHEVMSQERAAS) form a coiled coil. A disordered region spans residues 348 to 435 (QLPPSLSSQP…EQSSLPSSSR (88 aa)). The segment covering 356–366 (QPPPPYQPPPA) has biased composition (pro residues). 2 stretches are compositionally biased toward low complexity: residues 379 to 395 (AQSQ…QQQI) and 411 to 434 (QKQQ…PSSS). Residues 434 to 492 (SRWPKAEILALINLRSGMEPRYQDNVPKGLLWEEISTSMKRMGYNRNAKRCKEKWENIN) enclose the Myb-like 2 domain. The Nuclear localization signal 2 motif lies at 472–479 (MKRMGYNR). Residues 530–587 (GGGSSTSGLPQDQKQSPVTAMKPPQEGLVNVQQTHGSASTEEEEPIEESPQGTEKKTL) are disordered. 2 stretches are compositionally biased toward polar residues: residues 538-547 (LPQDQKQSPV) and 559-568 (NVQQTHGSAS).

Mostly expressed in siliques, and, to a lower extent, in growing root hairs, leaves, stems, and flowers. Present in abaxial epidermal cells, predominantly in guard cells, pavement cells, and meristemoids.

It localises to the nucleus. In terms of biological role, transcription repressor that binds specific DNA sequence such as GT3 box 5'-GGTAAA-3' in the SDD1 promoter. Negative regulator of water use efficiency (WUE) via the promotion of stomatal density and distribution by the transcription repression of SDD1. Regulates the expression of several cell cycle genes and endoreduplication, especially in trichomes where it prevents ploidy-dependent plant cell growth. Regulates negatively root hair growth by directly binding RSL4 promoter and repressing RSL4 expression. The sequence is that of Trihelix transcription factor GTL1 from Arabidopsis thaliana (Mouse-ear cress).